Here is a 245-residue protein sequence, read N- to C-terminus: Dehydrogenase/reductase SDR family member 6 (245 aa).

NAD(+)-binding positions include 16–18 (QGI), D37, and D58. R144 is a substrate binding site. Catalysis depends on Y147, which acts as the Proton acceptor. NAD(+) is bound by residues K151 and 180 to 184 (VDTPS). Substrate-binding residues include R188 and R205.

Belongs to the short-chain dehydrogenases/reductases (SDR) family. As to quaternary structure, homotetramer.

The protein resides in the cytoplasm. It carries out the reaction cis-4-hydroxy-L-proline + NAD(+) = 4-oxo-L-proline + NADH + H(+). The enzyme catalyses (R)-3-hydroxybutanoate + NAD(+) = acetoacetate + NADH + H(+). It participates in amino-acid metabolism. The protein operates within siderophore biosynthesis. NAD(H)-dependent dehydrogenase/reductase with a preference for cyclic substrates. Catalyzes stereoselective conversion of 4-oxo-L-proline to cis-4-hydroxy-L-proline, likely a detoxification mechanism for ketoprolines. Mediates the formation of 2,5-dihydroxybenzoate (2,5-DHBA), a siderophore that chelates free cytoplasmic iron, thereby regulating iron transport and homeostasis while protecting cells against free radical-induced oxidative stress. The iron-siderophore complex is imported into mitochondria, providing an iron source for mitochondrial metabolic processes in particular heme synthesis. May act as a 3-hydroxybutyrate dehydrogenase. The chain is Dehydrogenase/reductase SDR family member 6 (bdh2) from Xenopus laevis (African clawed frog).